A 335-amino-acid chain; its full sequence is Beta-ketoacyl-[acyl-carrier-protein] synthase III (335 aa).

Catalysis depends on residues Cys-119 and His-261. Positions 262-266 (QANQR) are ACP-binding. Residue Asn-291 is part of the active site.

This sequence belongs to the thiolase-like superfamily. FabH family. In terms of assembly, homodimer.

The protein resides in the cytoplasm. The enzyme catalyses malonyl-[ACP] + acetyl-CoA + H(+) = 3-oxobutanoyl-[ACP] + CO2 + CoA. It functions in the pathway lipid metabolism; fatty acid biosynthesis. Its function is as follows. Catalyzes the condensation reaction of fatty acid synthesis by the addition to an acyl acceptor of two carbons from malonyl-ACP. Catalyzes the first condensation reaction which initiates fatty acid synthesis and may therefore play a role in governing the total rate of fatty acid production. Possesses both acetoacetyl-ACP synthase and acetyl transacylase activities. Its substrate specificity determines the biosynthesis of branched-chain and/or straight-chain of fatty acids. In Prochlorococcus marinus (strain MIT 9312), this protein is Beta-ketoacyl-[acyl-carrier-protein] synthase III.